We begin with the raw amino-acid sequence, 375 residues long: Queuine tRNA-ribosyltransferase (375 aa).

Aspartate 89 functions as the Proton acceptor in the catalytic mechanism. Substrate is bound by residues 89-93 (DSGGF), aspartate 143, glutamine 187, and glycine 214. Residues 245–251 (GVGKPED) are RNA binding. Aspartate 264 (nucleophile) is an active-site residue. The interval 269 to 273 (TRNAR) is RNA binding; important for wobble base 34 recognition. Zn(2+) contacts are provided by cysteine 302, cysteine 304, cysteine 307, and histidine 333.

This sequence belongs to the queuine tRNA-ribosyltransferase family. As to quaternary structure, homodimer. Within each dimer, one monomer is responsible for RNA recognition and catalysis, while the other monomer binds to the replacement base PreQ1. The cofactor is Zn(2+).

The enzyme catalyses 7-aminomethyl-7-carbaguanine + guanosine(34) in tRNA = 7-aminomethyl-7-carbaguanosine(34) in tRNA + guanine. The protein operates within tRNA modification; tRNA-queuosine biosynthesis. Catalyzes the base-exchange of a guanine (G) residue with the queuine precursor 7-aminomethyl-7-deazaguanine (PreQ1) at position 34 (anticodon wobble position) in tRNAs with GU(N) anticodons (tRNA-Asp, -Asn, -His and -Tyr). Catalysis occurs through a double-displacement mechanism. The nucleophile active site attacks the C1' of nucleotide 34 to detach the guanine base from the RNA, forming a covalent enzyme-RNA intermediate. The proton acceptor active site deprotonates the incoming PreQ1, allowing a nucleophilic attack on the C1' of the ribose to form the product. After dissociation, two additional enzymatic reactions on the tRNA convert PreQ1 to queuine (Q), resulting in the hypermodified nucleoside queuosine (7-(((4,5-cis-dihydroxy-2-cyclopenten-1-yl)amino)methyl)-7-deazaguanosine). The protein is Queuine tRNA-ribosyltransferase of Photobacterium profundum (strain SS9).